The chain runs to 411 residues: RNA binding protein fox-1 homolog 2 (411 aa).

The disordered stretch occupies residues 16–175 (TRGTKRESDQ…SETKASPKRL (160 aa)). Composition is skewed to polar residues over residues 58–83 (PVSQ…TPDT) and 99–119 (NGLS…QSTE). The segment covering 135 to 165 (SAPATSTANASSTTDGSQTEGQQSQSQNNEN) has biased composition (low complexity). The RRM domain maps to 173–249 (KRLHVSNIPF…RKIEVNNATA (77 aa)).

Interacts with papd4/gld2.

The protein resides in the nucleus. It localises to the cytoplasm. In terms of biological role, RNA-binding protein that regulates alternative splicing events by binding to 5'-UGCAUGU-3' elements. Regulates alternative splicing of tissue-specific exons. This is RNA binding protein fox-1 homolog 2 (rbfox2) from Xenopus laevis (African clawed frog).